Reading from the N-terminus, the 463-residue chain is Fumarate hydratase class II (463 aa).

Substrate-binding positions include 95-97, 126-129, 136-138, and Thr184; these read SGT, HPND, and SSN. Catalysis depends on His185, which acts as the Proton donor/acceptor. Ser315 is an active-site residue. Substrate contacts are provided by residues Ser316 and 321-323; that span reads KIN.

This sequence belongs to the class-II fumarase/aspartase family. Fumarase subfamily. As to quaternary structure, homotetramer.

It is found in the cytoplasm. It carries out the reaction (S)-malate = fumarate + H2O. It participates in carbohydrate metabolism; tricarboxylic acid cycle; (S)-malate from fumarate: step 1/1. In terms of biological role, involved in the TCA cycle. Catalyzes the stereospecific interconversion of fumarate to L-malate. This Chlamydia muridarum (strain MoPn / Nigg) protein is Fumarate hydratase class II.